Here is a 479-residue protein sequence, read N- to C-terminus: Ribosomal RNA small subunit methyltransferase F (479 aa).

S-adenosyl-L-methionine is bound by residues 125-131 (AAAPGSK), Glu149, Asp176, and Asp194. Cys247 serves as the catalytic Nucleophile.

The protein belongs to the class I-like SAM-binding methyltransferase superfamily. RsmB/NOP family.

Its subcellular location is the cytoplasm. The enzyme catalyses cytidine(1407) in 16S rRNA + S-adenosyl-L-methionine = 5-methylcytidine(1407) in 16S rRNA + S-adenosyl-L-homocysteine + H(+). Functionally, specifically methylates the cytosine at position 1407 (m5C1407) of 16S rRNA. This chain is Ribosomal RNA small subunit methyltransferase F, found in Salmonella arizonae (strain ATCC BAA-731 / CDC346-86 / RSK2980).